The sequence spans 388 residues: MNKQIFVLYFNIFLIFLGIGLVIPVLPVYLKDLGLTGSDLGLLVAAFALSQMIISPFGGTLADKLGKKLIICIGLILFSVSEFMFAVGHNFSVLMLSRVIGGMSAGMVMPGVTGLIADVSPSHQKAKNFGYMSAIINSGFILGPGIGGFMAEVSHRMPFYFAGALGILAFIMSVVLIHDPKKSTTSGFQKLEPQLLTKINWKVFITPAILTLVLAFGLSAFETLYSLYTSYKVNYSPKDISIAITGGGIFGALFQIYFFDKFMKYFSELTFIAWSLIYSVIVLVLLVIADGYWTIMVISFAVFIGFDMIRPAITNYFSNIAGDRQGFAGGLNSTFTSMGNFIGPLIAGALFDVHIEAPIYMAIGVSLAGVVIVLIEKQHRAKLKQQDL.

The next 12 helical transmembrane spans lie at 5-25 (IFVL…VIPV), 42-62 (LLVA…GTLA), 69-89 (LIIC…AVGH), 99-119 (VIGG…IADV), 129-149 (FGYM…IGGF), 157-177 (MPFY…VVLI), 201-221 (WKVF…LSAF), 239-259 (DISI…IYFF), 269-289 (LTFI…LVIA), 293-313 (WTIM…RPAI), 331-351 (LNST…GALF), and 355-375 (IEAP…IVLI).

It belongs to the major facilitator superfamily. TCR/Tet family.

It localises to the cell membrane. Involved in quinolone resistance. May constitute a membrane-associated active efflux pump of hydrophilic quinolones. The protein is Quinolone resistance protein NorA (norA) of Staphylococcus aureus (strain MRSA252).